The sequence spans 249 residues: Small ribosomal subunit protein uS2 (249 aa).

It belongs to the universal ribosomal protein uS2 family.

The protein is Small ribosomal subunit protein uS2 of Acinetobacter baylyi (strain ATCC 33305 / BD413 / ADP1).